The chain runs to 762 residues: N,N-dimethylformamidase beta subunit (762 aa).

As to quaternary structure, heterotetramer of two DmfA1 (alpha) and two DmfA2 (beta) subunits.

It carries out the reaction N,N-dimethylformamide + H2O = dimethylamine + formate. Its function is as follows. Hydrolyzes N,N-dimethylformamide, and to a lesser extent N,N-dimethylacetamide and N,N-diethylacetamide. Has no activity against the substituted amides N-methylformamide, N-ethylformamide, N-ethylformamide and N-methylacetamide or the unsubstituted amides formamide, nicotinamide, acetoamide, benzamide, acetamide and acrylamide. The protein is N,N-dimethylformamidase beta subunit of Paracoccus aminophilus.